Consider the following 264-residue polypeptide: Phosphonoacetaldehyde hydrolase (264 aa).

D9 serves as the catalytic Nucleophile. Mg(2+)-binding residues include D9 and A11. The active-site Schiff-base intermediate with substrate is the K50. D183 is a binding site for Mg(2+).

This sequence belongs to the HAD-like hydrolase superfamily. PhnX family. Homodimer. The cofactor is Mg(2+).

It catalyses the reaction phosphonoacetaldehyde + H2O = acetaldehyde + phosphate + H(+). Its function is as follows. Involved in phosphonate degradation. The polypeptide is Phosphonoacetaldehyde hydrolase (Bacillus cereus (strain G9842)).